Reading from the N-terminus, the 83-residue chain is Mitochondrial import inner membrane translocase subunit Tim8 B (83 aa).

Position 2 is an N-acetylalanine (alanine 2). The Twin CX3C motif signature appears at 36 to 59 (CWDKCVEKPGSRLDSRTENCLSSC). Cystine bridges form between cysteine 36-cysteine 59 and cysteine 40-cysteine 55.

The protein belongs to the small Tim family. In terms of assembly, heterohexamer; possibly composed of 3 copies of TIMM8B and 3 copies of TIMM13, named soluble 70 kDa complex. Associates with the TIM22 complex, whose core is composed of TIMM22.

The protein localises to the mitochondrion inner membrane. Functionally, probable mitochondrial intermembrane chaperone that participates in the import and insertion of some multi-pass transmembrane proteins into the mitochondrial inner membrane. Also required for the transfer of beta-barrel precursors from the TOM complex to the sorting and assembly machinery (SAM complex) of the outer membrane. Acts as a chaperone-like protein that protects the hydrophobic precursors from aggregation and guide them through the mitochondrial intermembrane space. The polypeptide is Mitochondrial import inner membrane translocase subunit Tim8 B (Timm8b) (Mus musculus (Mouse)).